A 221-amino-acid polypeptide reads, in one-letter code: Dynein light chain Tctex-type 4 (221 aa).

Disordered stretches follow at residues 1-52 (MASR…SRRG) and 65-87 (NSLV…VPPL). Positions 10 to 21 (RQEEENAKDSGR) are enriched in basic and acidic residues. Ser-66 carries the post-translational modification Phosphoserine.

Belongs to the dynein light chain Tctex-type family. Interacts with ENG/endoglin, TGFBR2 and TGFBR3. Interacts with PPP1CC. As to expression, ubiquitously expressed. Expressed in testis (at protein level).

The protein resides in the cell projection. The protein localises to the cilium. It is found in the flagellum. Its subcellular location is the cytoplasmic vesicle. It localises to the secretory vesicle. The protein resides in the acrosome. The protein localises to the cytoplasm. It is found in the cytoskeleton. Its subcellular location is the cilium axoneme. It localises to the nucleus. The protein resides in the microtubule organizing center. In Homo sapiens (Human), this protein is Dynein light chain Tctex-type 4.